Reading from the N-terminus, the 238-residue chain is Gas vesicle protein F (238 aa).

The protein belongs to the gas vesicle GvpF/GvpL family. In terms of assembly, binds GvpA.

It is found in the gas vesicle. Its function is as follows. A minor component of the gas vesicle, may be involved in preventing GvpA aggregation during gas vesicle nucleation. Gas vesicles are hollow, gas filled proteinaceous nanostructures found in some microorganisms. It is not clear what function gas vesicles perform in soil bacteria. The chain is Gas vesicle protein F from Streptomyces sp. (strain CB03234).